We begin with the raw amino-acid sequence, 335 residues long: NADH-ubiquinone oxidoreductase chain 2 (335 aa).

Transmembrane regions (helical) follow at residues 7–27, 28–48, 58–78, 81–101, 110–130, 147–167, 174–194, 200–220, 240–260, 274–294, and 315–335; these read PTMA…VSSA, NWMF…PIMM, GAVK…MSST, WMTF…AIML, FWYP…LSSW, NMNF…VIGM, TIMA…AAVY, IMYF…MGYL, MALL…GFMP, IILL…LNII, and SLKF…FIML.

The protein belongs to the complex I subunit 2 family.

The protein localises to the mitochondrion inner membrane. It carries out the reaction a ubiquinone + NADH + 5 H(+)(in) = a ubiquinol + NAD(+) + 4 H(+)(out). Core subunit of the mitochondrial membrane respiratory chain NADH dehydrogenase (Complex I) that is believed to belong to the minimal assembly required for catalysis. Complex I functions in the transfer of electrons from NADH to the respiratory chain. The immediate electron acceptor for the enzyme is believed to be ubiquinone. The sequence is that of NADH-ubiquinone oxidoreductase chain 2 (ND2) from Lumbricus terrestris (Common earthworm).